A 52-amino-acid polypeptide reads, in one-letter code: Phospholamban (52 aa).

Residue M1 is modified to N-acetylmethionine. Topologically, residues 1–31 (MEKVQYLTRSAIRRASTIEMPQQARQNLQNL) are cytoplasmic. S16 bears the Phosphoserine; by PKA mark. T17 is modified (phosphothreonine; by CaMK2). A helical transmembrane segment spans residues 32–52 (FINFCLILICLLLICIIVMLL). C36 is lipidated: S-palmitoyl cysteine.

Belongs to the phospholamban family. Homopentamer. Can also form heterooligomers with other sarcoplasmic/endoplasmic reticulum calcium ATPase (SERCA) regulators ARLN, ERLN, SLN and STRIT1/DWORF. Monomer. Interacts with HAX1. Interacts as a monomer with ATP2A2; the interaction decreases ATP2A2 Ca(2+) affinity. Interacts with VMP1; VMP1 competes with PLN and SLN to prevent them from forming an inhibitory complex with ATP2A2. Interacts with S100A1 in a Ca(2+)-dependent manner. Post-translationally, phosphorylated at Thr-17 by CaMK2, and in response to beta-adrenergic stimulation. Phosphorylation by DMPK may stimulate sarcoplasmic reticulum calcium uptake in cardiomyocytes. Phosphorylation by PKA abolishes the inhibition of ATP2A2-mediated calcium uptake. Palmitoylated by ZDHHC16, promoting formation of the homopentamer. In terms of processing, in elongated spermatids, proteolytically cleaved by SPPL2C which modulates intracellular Ca(2+) homeostasis. In terms of tissue distribution, expressed in testis (at protein level). In brain, expressed specifically in GABAergic GAD67+ neurons of the thalamic reticular nucleus where it colocalizes with ATP2A2/SERCA2 (at protein level). Expressed in the bladder and in the atria and ventricles of the heart.

The protein resides in the endoplasmic reticulum membrane. Its subcellular location is the sarcoplasmic reticulum membrane. The protein localises to the mitochondrion membrane. It localises to the membrane. In terms of biological role, reversibly inhibits the activity of ATP2A2/SERCA2 in cardiac sarcoplasmic reticulum by decreasing the apparent affinity of the ATPase for Ca(2+). Binds preferentially to the ATP-bound E1 conformational form of ATP2A2 which predominates at low Ca(2+) concentrations during the diastolic phase of the cardiac cycle. Inhibits ATP2A2 Ca(2+) affinity by disrupting its allosteric activation by ATP. Modulates the contractility of the heart muscle in response to physiological stimuli via its effects on ATP2A2. Modulates calcium re-uptake during muscle relaxation and plays an important role in calcium homeostasis in the heart muscle. The degree of ATP2A2 inhibition depends on the oligomeric state of PLN. ATP2A2 inhibition is alleviated by PLN phosphorylation. Also inhibits the activity of ATP2A3/SERCA3. Controls intracellular Ca(2+) levels in elongated spermatids and may play a role in germ cell differentiation. In the thalamic reticular nucleus of the brain, plays a role in the regulation of sleep patterns and executive functioning. This is Phospholamban from Mus musculus (Mouse).